The primary structure comprises 963 residues: Collagen alpha-1(I) chain (963 aa).

The segment at 1-963 (GPMGPSGPRG…PGPPGPPGPP (963 aa)) is disordered. Residues 40-54 (NGDDGEAGKPGRPGE) are compositionally biased toward basic and acidic residues. S82 carries the post-translational modification Phosphoserine. Low complexity-rich tracts occupy residues 90 to 106 (DAGP…PGEN) and 129 to 142 (PAGA…TGAA). Over residues 144 to 156 (PPGPTGPAGPPGF) the composition is skewed to pro residues. Positions 190 to 229 (AGAAGPAGNPGADGQPGAKGANGAPGIAGAPGFPGARGPS) are enriched in low complexity. The segment covering 296-305 (GERGGPGARG) has biased composition (gly residues). 6 stretches are compositionally biased toward low complexity: residues 313 to 337 (AGPK…PGEA), 349 to 375 (KGIT…QDGR), 384 to 403 (ARGQ…AGEP), 482 to 495 (PRGA…DGAK), 555 to 569 (SGPS…ARGA), and 582 to 609 (AGFA…KGDA). S558 bears the Phosphoserine mark. The segment covering 611 to 623 (PPGPAGPTGPPGP) has biased composition (pro residues). 3 stretches are compositionally biased toward low complexity: residues 638 to 654 (SAGP…AGRV), 683 to 692 (ETGPAGRPGE), and 702 to 726 (AGEK…QGIA). 2 stretches are compositionally biased toward pro residues: residues 767 to 777 (PPGPVGPPGIA) and 813 to 828 (AGPP…PGPV). Over residues 849–863 (IGPVGARGPAGPQGP) the composition is skewed to low complexity. A compositionally biased stretch (basic and acidic residues) spans 864–878 (RGDKGETGEQGDRGI). The segment covering 897-930 (PGEQGPSGASGPAGPRGPPGSAGAPGKDGINGIP) has biased composition (low complexity). The span at 948-963 (VGPPGPPGPPGPPGPP) shows a compositional bias: pro residues.

The protein belongs to the fibrillar collagen family. Trimers of one alpha 2(I) and two alpha 1(I) chains. In terms of processing, prolines at the third position of the tripeptide repeating unit (G-X-Y) are hydroxylated in some or all of the chains. In terms of tissue distribution, forms the fibrils of tendon, ligaments and bones. In bones, the fibrils are mineralized with calcium hydroxyapatite.

It localises to the secreted. Its subcellular location is the extracellular space. It is found in the extracellular matrix. Its function is as follows. Type I collagen is a member of group I collagen (fibrillar forming collagen). This chain is Collagen alpha-1(I) chain, found in Tapirus terrestris (Lowland tapir).